The chain runs to 1017 residues: Voltage-gated delayed rectifier potassium channel KCNH4 (1017 aa).

Residues 1–232 (MPVMKGLLAP…YSIPKAVWDG (232 aa)) are Cytoplasmic-facing. The PAS domain maps to 14-90 (FLDTIATRFD…QRLQKALEGH (77 aa)). Residues 93 to 145 (HRAEICFYRKDGSAFWCLLDMMPIKNELGEVVLFLFSFKDISQSGGPGLGSPG) enclose the PAC domain. The disordered stretch occupies residues 139–170 (PGLGSPGIHGDNNNHENSLGRRGASSRLRSTR). A helical membrane pass occupies residues 233-253 (LILLATFYVAVTVPYNVCFAG). Topologically, residues 254 to 262 (DDDTPITSR) are extracellular. A helical transmembrane segment spans residues 263–283 (HTLVSDIAVEMLFILDIILNF). Over 284 to 305 (RTTYVSQSGQVVSAPRSIGLHY) the chain is Cytoplasmic. The helical transmembrane segment at 306-326 (LATWFFVDLIAALPFDLLYVF) threads the bilayer. Topologically, residues 327-334 (NITVTSLV) are extracellular. A helical; Voltage-sensor membrane pass occupies residues 335-355 (HLLKTVRLLRLLRLLQKLERY). Residues 356–364 (SQCSAVVLT) lie on the Cytoplasmic side of the membrane. The chain crosses the membrane as a helical span at residues 365–385 (LLMSVFALLAHWMACVWYVIG). At 386–427 (RREMEANDPLLWDIGWLHELGKRLEEPYVNGSAGGPSRRSAY) the chain is on the extracellular side. An N-linked (GlcNAc...) asparagine glycan is attached at N415. The pore-forming intramembrane region spans 428 to 448 (IAALYFTLSSLTSVGFGNVCA). Positions 440–445 (SVGFGN) match the Selectivity filter motif. At 449–454 (NTDAEK) the chain is on the extracellular side. A helical transmembrane segment spans residues 455 to 475 (IFSICTMLIGALMHAVVFGNV). The Cytoplasmic segment spans residues 476–1017 (TAIIQRMYSR…SFQSGSDTFH (542 aa)). The cNMP-binding domain stretch occupies residues 557–621 (LFGAASRGCL…AILGKGDLIG (65 aa)). 2 disordered regions span residues 690–749 (GSEN…PNLS) and 771–870 (LVSS…ELAT). Residues 703 to 726 (PRLSQARSDTLGSSSDKTLPSITE) show a composition bias toward polar residues. 2 stretches are compositionally biased toward low complexity: residues 771–786 (LVSS…PALA) and 806–820 (PPQL…FGPP). A coiled-coil region spans residues 873-907 (AEEVKEKVCRLNQEISRLNQEVSQLSRELRQVMGL). A disordered region spans residues 972–1017 (SELRSSMVPPFPSEPDPLGPSPVPEASPLTPSLLKHSFQSGSDTFH). Over residues 980–996 (PPFPSEPDPLGPSPVPE) the composition is skewed to pro residues. Residues 1008–1017 (SFQSGSDTFH) show a composition bias toward polar residues.

Belongs to the potassium channel family. H (Eag) (TC 1.A.1.20) subfamily. Kv12.3/KCNH4 sub-subfamily. As to quaternary structure, the potassium channel is probably composed of a homo- or heterotetrameric complex of pore-forming alpha subunits that can associate with modulating beta subunits. In terms of tissue distribution, highly expressed in adult testis, and in adult and embryonic brain. In adult brain found in piriform cortex, olfactory tubercle, cerebral cortex, hippocampus pyramidial cells and dentate gyrus and basal ganglia of caudate/putamen and accumbens nucleus. Detected at intermediate levels in lung, spinal cord, and pituitary.

The protein resides in the membrane. It catalyses the reaction K(+)(in) = K(+)(out). Functionally, pore-forming (alpha) subunit of a voltage-gated delayed rectifier. Activates at more negative voltages, exhibits fast prepulse-independent activation kinetics and deactivates much more slowly, but shows no inactivation. The chain is Voltage-gated delayed rectifier potassium channel KCNH4 from Rattus norvegicus (Rat).